Here is a 343-residue protein sequence, read N- to C-terminus: Isopentenyl-diphosphate delta-isomerase (343 aa).

9–10 (RK) lines the substrate pocket. Residues serine 67, 68-70 (AMT), serine 98, and asparagine 127 contribute to the FMN site. 98 to 100 (SQR) is a substrate binding site. Residue glutamine 162 participates in substrate binding. Residue glutamate 163 participates in Mg(2+) binding. FMN-binding positions include lysine 194, threonine 224, 273–275 (GVR), and 294–295 (AA).

This sequence belongs to the IPP isomerase type 2 family. Homooctamer. Dimer of tetramers. It depends on FMN as a cofactor. NADPH serves as cofactor. Requires Mg(2+) as cofactor.

It is found in the cytoplasm. The catalysed reaction is isopentenyl diphosphate = dimethylallyl diphosphate. Involved in the biosynthesis of isoprenoids. Catalyzes the 1,3-allylic rearrangement of the homoallylic substrate isopentenyl (IPP) to its allylic isomer, dimethylallyl diphosphate (DMAPP). This chain is Isopentenyl-diphosphate delta-isomerase, found in Xanthobacter autotrophicus (strain ATCC BAA-1158 / Py2).